Here is a 321-residue protein sequence, read N- to C-terminus: uncharacterized protein (321 aa).

This is an uncharacterized protein from Sinorhizobium fredii (strain NBRC 101917 / NGR234).